A 419-amino-acid chain; its full sequence is MGKGEELTTTKYLIHAQINANGIVEKPDVVGAVFGQTEGLLSNDLDLRELQRTGRIGRIQVMIHSNGGRAKGEIVIPSSLDRVETAILAASLETINRVGPCEAEIHTVKVEDVRAVKREQVVNRAKEIYKNMIESASPASMRMIEEVREAMRVHEISEYGEDRLPAGPSIHTSDAIIVVEGRSDVLNLLKYGIKNTVAVEGVSVPQSIGNLSKKRTTTAFVDGDRGGELILKELLQIGDVDYITRAPKGKEVEDLEKDEVLVALRDKVPTAQFLANHNILSESDSKNSHKKHNGKHNNKHSNNKHQQHETKVKEEVQIEEIPIEDDETKLMKDMLKEFEGSGCGAILDEALNMTQEVEVENIYEEIKNIETSADTVIFDGIISQRLVDVASLKGIKRLVAFRSMNIVKKPDNLKIITMD.

A Toprim domain is found at 174–260 (DAIIVVEGRS…EVEDLEKDEV (87 aa)). Mg(2+) contacts are provided by Glu-180, Asp-222, and Asp-224. The interval 277–314 (HNILSESDSKNSHKKHNGKHNNKHSNNKHQQHETKVKE) is disordered. Basic residues predominate over residues 288–305 (SHKKHNGKHNNKHSNNKH).

Belongs to the archaeal DnaG primase family. In terms of assembly, forms a ternary complex with MCM helicase and DNA. Component of the archaeal exosome complex. Mg(2+) is required as a cofactor.

The catalysed reaction is ssDNA + n NTP = ssDNA/pppN(pN)n-1 hybrid + (n-1) diphosphate.. Its function is as follows. RNA polymerase that catalyzes the synthesis of short RNA molecules used as primers for DNA polymerase during DNA replication. Also part of the exosome, which is a complex involved in RNA degradation. Acts as a poly(A)-binding protein that enhances the interaction between heteromeric, adenine-rich transcripts and the exosome. The sequence is that of DNA primase DnaG from Methanobrevibacter smithii (strain ATCC 35061 / DSM 861 / OCM 144 / PS).